The chain runs to 197 residues: ATP-dependent Clp protease proteolytic subunit 2 (197 aa).

Ser96 acts as the Nucleophile in catalysis. His121 is an active-site residue.

Belongs to the peptidase S14 family. As to quaternary structure, fourteen ClpP subunits assemble into 2 heptameric rings which stack back to back to give a disk-like structure with a central cavity, resembling the structure of eukaryotic proteasomes.

Its subcellular location is the cytoplasm. The enzyme catalyses Hydrolysis of proteins to small peptides in the presence of ATP and magnesium. alpha-casein is the usual test substrate. In the absence of ATP, only oligopeptides shorter than five residues are hydrolyzed (such as succinyl-Leu-Tyr-|-NHMec, and Leu-Tyr-Leu-|-Tyr-Trp, in which cleavage of the -Tyr-|-Leu- and -Tyr-|-Trp bonds also occurs).. Its function is as follows. Cleaves peptides in various proteins in a process that requires ATP hydrolysis. Has a chymotrypsin-like activity. Plays a major role in the degradation of misfolded proteins. This chain is ATP-dependent Clp protease proteolytic subunit 2, found in Synechococcus sp. (strain CC9605).